We begin with the raw amino-acid sequence, 411 residues long: Proteasome-activating nucleotidase 2 (411 aa).

Residues 35 to 75 adopt a coiled-coil conformation; it reads IVAVNGELQAQLDDVEARREELREEVNRLQRENETLKTASL. Residues 196–201 and His335 each bind ATP; that span reads GTGKTM. The segment at 408 to 411 is docks into pockets in the proteasome alpha-ring to cause gate opening; sequence SYIQ.

This sequence belongs to the AAA ATPase family. As to quaternary structure, homohexamer. The hexameric complex has a two-ring architecture resembling a top hat that caps the 20S proteasome core at one or both ends. Upon ATP-binding, the C-terminus of PAN interacts with the alpha-rings of the proteasome core by binding to the intersubunit pockets.

The protein resides in the cytoplasm. ATPase which is responsible for recognizing, binding, unfolding and translocation of substrate proteins into the archaeal 20S proteasome core particle. Is essential for opening the gate of the 20S proteasome via an interaction with its C-terminus, thereby allowing substrate entry and access to the site of proteolysis. Thus, the C-termini of the proteasomal ATPase function like a 'key in a lock' to induce gate opening and therefore regulate proteolysis. Unfolding activity requires energy from ATP hydrolysis, whereas ATP binding alone promotes ATPase-20S proteasome association which triggers gate opening, and supports translocation of unfolded substrates. The protein is Proteasome-activating nucleotidase 2 of Halobacterium salinarum (strain ATCC 700922 / JCM 11081 / NRC-1) (Halobacterium halobium).